The chain runs to 134 residues: Shikimate kinase (134 aa).

Belongs to the shikimate kinase family.

Its subcellular location is the cytoplasm. The catalysed reaction is shikimate + ATP = 3-phosphoshikimate + ADP + H(+). The protein operates within metabolic intermediate biosynthesis; chorismate biosynthesis; chorismate from D-erythrose 4-phosphate and phosphoenolpyruvate: step 5/7. In Neisseria gonorrhoeae, this protein is Shikimate kinase (aroK).